Reading from the N-terminus, the 150-residue chain is C-type lectin 16 (150 aa).

The signal sequence occupies residues 1-27; sequence MKRVRVKVIFVSFGLLVVFLSLSGTAA. 3 disulfide bridges follow: Cys-29-Cys-40, Cys-57-Cys-146, and Cys-123-Cys-138. The C-type lectin domain occupies 36–147; the sequence is YEGHCYKPFN…CRMLARFVCE (112 aa).

It belongs to the snaclec family. In terms of assembly, heteromultimer; disulfide-linked. In terms of tissue distribution, expressed by the venom gland.

The protein resides in the secreted. Interferes with one step of hemostasis (modulation of platelet aggregation, or coagulation cascade, for example). This Crotalus adamanteus (Eastern diamondback rattlesnake) protein is C-type lectin 16.